Consider the following 148-residue polypeptide: MRGDNTGVGKEPAVTERPAIKGYLYVLGSILLVTLAQLAMKWGVMQLPAWQASLDIMLAHPVPLLVITAGVGCYALSLLCWLAALHFTPLNIAYPLLSTSYALVYLLAVSIPSFAEPLEPGKAVGVIFILLGAVLVGIKPVGRKRNAH.

The Cytoplasmic portion of the chain corresponds to 1–23 (MRGDNTGVGKEPAVTERPAIKGY). Residues 24–44 (LYVLGSILLVTLAQLAMKWGV) form a helical membrane-spanning segment. Residues 45 to 63 (MQLPAWQASLDIMLAHPVP) are Periplasmic-facing. The helical transmembrane segment at 64–84 (LLVITAGVGCYALSLLCWLAA) threads the bilayer. Residues 85 to 91 (LHFTPLN) lie on the Cytoplasmic side of the membrane. A helical membrane pass occupies residues 92 to 112 (IAYPLLSTSYALVYLLAVSIP). Over 113–117 (SFAEP) the chain is Periplasmic. A helical transmembrane segment spans residues 118-138 (LEPGKAVGVIFILLGAVLVGI). Residues 139-148 (KPVGRKRNAH) are Cytoplasmic-facing.

Belongs to the ArnF family. As to quaternary structure, heterodimer of ArnE and ArnF.

It localises to the cell inner membrane. It functions in the pathway bacterial outer membrane biogenesis; lipopolysaccharide biosynthesis. In terms of biological role, translocates 4-amino-4-deoxy-L-arabinose-phosphoundecaprenol (alpha-L-Ara4N-phosphoundecaprenol) from the cytoplasmic to the periplasmic side of the inner membrane. The sequence is that of Probable 4-amino-4-deoxy-L-arabinose-phosphoundecaprenol flippase subunit ArnF from Aeromonas salmonicida (strain A449).